We begin with the raw amino-acid sequence, 298 residues long: Acidic endochitinase (298 aa).

A signal peptide spans 1 to 29 (MKPNMACLKQVSALLLPLLFISFFKPSHA). In terms of domain architecture, GH18 spans 30-298 (GGISVYWGQN…GYSGAIIGSV (269 aa)). Disulfide bonds link cysteine 49/cysteine 96 and cysteine 79/cysteine 86. Glutamate 156 serves as the catalytic Proton donor. An intrachain disulfide couples cysteine 185 to cysteine 214.

It belongs to the glycosyl hydrolase 18 family. Chitinase class II subfamily.

It is found in the secreted. The protein localises to the extracellular space. The enzyme catalyses Random endo-hydrolysis of N-acetyl-beta-D-glucosaminide (1-&gt;4)-beta-linkages in chitin and chitodextrins.. Its function is as follows. This protein functions as a defense against chitin containing fungal pathogens. The sequence is that of Acidic endochitinase from Phaseolus angularis (Azuki bean).